A 736-amino-acid polypeptide reads, in one-letter code: Zinc finger CCCH domain-containing protein 14 (736 aa).

N-acetylmethionine is present on Met1. Polar residues-rich tracts occupy residues 77 to 103 (TTEP…SNFS) and 131 to 145 (VSTS…NVRQ). Residues 77–145 (TTEPSSLKSS…QESKTTNVRQ (69 aa)) form a disordered region. At Ser85 the chain carries Phosphoserine. Glycyl lysine isopeptide (Lys-Gly) (interchain with G-Cter in SUMO2) cross-links involve residues Lys99, Lys139, Lys175, and Lys198. Ser240 is modified (phosphoserine). Lys245 participates in a covalent cross-link: Glycyl lysine isopeptide (Lys-Gly) (interchain with G-Cter in SUMO2). Residue Ser281 is modified to Phosphoserine. Residues Lys283 and Lys295 each participate in a glycyl lysine isopeptide (Lys-Gly) (interchain with G-Cter in SUMO2) cross-link. Residues 310–350 (HDGEEEEEDDDYGSRTGSISSSVSVPAKPERRPSLPPSKQA) form a disordered region. 2 positions are modified to phosphoserine: Ser327 and Ser343. Residue Lys357 is modified to N6-acetyllysine; alternate. A Glycyl lysine isopeptide (Lys-Gly) (interchain with G-Cter in SUMO2); alternate cross-link involves residue Lys357. A Glycyl lysine isopeptide (Lys-Gly) (interchain with G-Cter in SUMO2) cross-link involves residue Lys378. 2 positions are modified to phosphoserine: Ser390 and Ser409. The interval 398–430 (VVQGQSRTPRISPPIKEEETKGDSVEKNQGTQQ) is disordered. The segment covering 412–423 (IKEEETKGDSVE) has biased composition (basic and acidic residues). Lys413 participates in a covalent cross-link: Glycyl lysine isopeptide (Lys-Gly) (interchain with G-Cter in SUMO2). Ser421 is subject to Phosphoserine. Residue Lys489 forms a Glycyl lysine isopeptide (Lys-Gly) (interchain with G-Cter in SUMO2) linkage. Residues Ser498, Ser515, Ser527, and Ser620 each carry the phosphoserine modification. C3H1-type zinc fingers lie at residues 595 to 620 (EKLL…HPIS), 621 to 640 (PCKA…VHPN), 641 to 656 (CKYD…PFTH), 682 to 699 (CRYF…YHPK), and 701 to 719 (CRFN…HPTI).

The protein belongs to the ZC3H14 family. Homodimer; facilitating circular RNAs (circRNAs) formation. Associates with the spliceosome. Interacts with HOOK2. Interacts with ZFC3H1 in a RNase-sensitive manner. Expressed in fetal and adult brain. Expressed in fetal and adult temporal lobe.

The protein resides in the nucleus speckle. Its subcellular location is the cytoplasm. RNA-binding protein involved in the biogenesis of circular RNAs (circRNAs), which are produced by back-splicing circularization of pre-mRNAs. Acts by binding to both exon-intron boundary and 3'-UTR of pre-mRNAs to promote circRNA biogenesis through dimerization and the association with the spliceosome. Required for spermatogenesis via involvement in circRNA biogenesis. Regulates the pre-mRNA processing of ATP5MC1; preventing its degradation. Also binds the poly(A) tail of mRNAs; controlling poly(A) length in neuronal cells. The sequence is that of Zinc finger CCCH domain-containing protein 14 from Homo sapiens (Human).